Here is a 21-residue protein sequence, read N- to C-terminus: Granule-bound starch synthase 1 (21 aa).

Belongs to the glycosyltransferase 1 family. Bacterial/plant glycogen synthase subfamily.

Its subcellular location is the plastid. The protein resides in the chloroplast. It is found in the amyloplast. The enzyme catalyses an NDP-alpha-D-glucose + [(1-&gt;4)-alpha-D-glucosyl](n) = [(1-&gt;4)-alpha-D-glucosyl](n+1) + a ribonucleoside 5'-diphosphate + H(+). It functions in the pathway glycan biosynthesis; starch biosynthesis. The sequence is that of Granule-bound starch synthase 1 from Secale cereale (Rye).